A 249-amino-acid polypeptide reads, in one-letter code: Probable transcriptional regulatory protein FN1661 (249 aa).

Residues 1 to 10 are compositionally biased toward polar residues; the sequence is MSGHSKWNNI. The disordered stretch occupies residues 1–20; it reads MSGHSKWNNIQHRKGAQDKK.

Belongs to the TACO1 family.

The protein localises to the cytoplasm. In Fusobacterium nucleatum subsp. nucleatum (strain ATCC 25586 / DSM 15643 / BCRC 10681 / CIP 101130 / JCM 8532 / KCTC 2640 / LMG 13131 / VPI 4355), this protein is Probable transcriptional regulatory protein FN1661.